The sequence spans 301 residues: MKFKNTLSIFKILIILFSFYNVAFSDDTEKYTFKGTFGTSALTNSKTNSVKGSADLIIARVDGGYKFSYSISLTGIDGTDVSQVKLLGPSAPNTDGGQLKLTLPFDSSTVLTSTKFVGGGSQAVAPNSPTSFYIGQTLIDITSEKSNYANEQFYITVATFTEGAQQPVSRSQLLYTGSSNTPNSGGGTNPNGSSDVPPTVGPISSSDSTNSNSSSTDTASSSPSSSPSSSPSPNDSEESDNDSLQTDSTVLNPGGVETSTAGSSTGTTSSTTGSKDSSTGNSILPTLIIVTFFVLTLVIMS.

A signal peptide spans 1–25 (MKFKNTLSIFKILIILFSFYNVAFS). At 26–279 (DDTEKYTFKG…STTGSKDSST (254 aa)) the chain is on the extracellular side. The interval 174–281 (LYTGSSNTPN…TGSKDSSTGN (108 aa)) is disordered. 4 N-linked (GlcNAc...) asparagine glycosylation sites follow: asparagine 191, asparagine 212, asparagine 234, and asparagine 241. Residues 204 to 234 (SSSDSTNSNSSSTDTASSSPSSSPSSSPSPN) show a composition bias toward low complexity. The segment covering 254–281 (GGVETSTAGSSTGTTSSTTGSKDSSTGN) has biased composition (low complexity). A helical transmembrane segment spans residues 280–300 (GNSILPTLIIVTFFVLTLVIM). Serine 301 is a topological domain (cytoplasmic).

The protein localises to the membrane. This is an uncharacterized protein from Dictyostelium discoideum (Social amoeba).